Reading from the N-terminus, the 82-residue chain is Small ribosomal subunit protein uS17 (82 aa).

Belongs to the universal ribosomal protein uS17 family. Part of the 30S ribosomal subunit.

In terms of biological role, one of the primary rRNA binding proteins, it binds specifically to the 5'-end of 16S ribosomal RNA. This chain is Small ribosomal subunit protein uS17, found in Bradyrhizobium diazoefficiens (strain JCM 10833 / BCRC 13528 / IAM 13628 / NBRC 14792 / USDA 110).